We begin with the raw amino-acid sequence, 291 residues long: MAGMKEIRGKIKSVQNTRKITKAMEMVAASKMRRAQERMRAARPYADKVRAIAAHMSRANPEYRHPFMVANEGAKTAGIILVTTDKGLCGGLNTNVLRATVQKFKELEEKGQKVEATAIGSKGLGFLNRFGAKVLSQVVHLGDTPHLDKLIGAVKTQLDLYSEGKLSAVYIAYTRFVNTMKQEAVIEQLLPLSSEHFEADDGTPATSWDYIYEPDAQAVVDELLVRYVEALVYQAVAENMASEQSARMVAMKAASDNAKTVISELQLVYNKSRQAAITKELSEIVGGAAAV.

Belongs to the ATPase gamma chain family. F-type ATPases have 2 components, CF(1) - the catalytic core - and CF(0) - the membrane proton channel. CF(1) has five subunits: alpha(3), beta(3), gamma(1), delta(1), epsilon(1). CF(0) has three main subunits: a, b and c.

The protein resides in the cell inner membrane. Functionally, produces ATP from ADP in the presence of a proton gradient across the membrane. The gamma chain is believed to be important in regulating ATPase activity and the flow of protons through the CF(0) complex. The sequence is that of ATP synthase gamma chain from Burkholderia lata (strain ATCC 17760 / DSM 23089 / LMG 22485 / NCIMB 9086 / R18194 / 383).